The chain runs to 341 residues: uncharacterized protein (341 aa).

The chain crosses the membrane as a helical span at residues 315–337; the sequence is VAAWFSGIAGGTFLALKLVSLMM.

The protein localises to the cell membrane. This is an uncharacterized protein from Bacillus subtilis (strain 168).